An 891-amino-acid chain; its full sequence is DNA mismatch repair protein MutS (891 aa).

646–653 (GPNMAGKS) contributes to the ATP binding site.

It belongs to the DNA mismatch repair MutS family.

Its function is as follows. This protein is involved in the repair of mismatches in DNA. It is possible that it carries out the mismatch recognition step. This protein has a weak ATPase activity. The polypeptide is DNA mismatch repair protein MutS (Rickettsia canadensis (strain McKiel)).